The following is a 206-amino-acid chain: N-(5'-phosphoribosyl)anthranilate isomerase (206 aa).

This sequence belongs to the TrpF family.

The catalysed reaction is N-(5-phospho-beta-D-ribosyl)anthranilate = 1-(2-carboxyphenylamino)-1-deoxy-D-ribulose 5-phosphate. It functions in the pathway amino-acid biosynthesis; L-tryptophan biosynthesis; L-tryptophan from chorismate: step 3/5. The chain is N-(5'-phosphoribosyl)anthranilate isomerase from Nitrosococcus oceani (strain ATCC 19707 / BCRC 17464 / JCM 30415 / NCIMB 11848 / C-107).